A 195-amino-acid polypeptide reads, in one-letter code: Probable GTP-binding protein EngB (195 aa).

Residues 22–195 (QLPEIALAGR…WSALSRYIKR (174 aa)) enclose the EngB-type G domain. GTP is bound by residues 30–37 (GRSNVGKS), 57–61 (GKTQT), 75–78 (DVPG), 142–145 (TKLD), and 174–176 (FSA). Mg(2+) contacts are provided by S37 and T59.

It belongs to the TRAFAC class TrmE-Era-EngA-EngB-Septin-like GTPase superfamily. EngB GTPase family. It depends on Mg(2+) as a cofactor.

Necessary for normal cell division and for the maintenance of normal septation. This Oceanobacillus iheyensis (strain DSM 14371 / CIP 107618 / JCM 11309 / KCTC 3954 / HTE831) protein is Probable GTP-binding protein EngB.